The chain runs to 231 residues: Adenosylcobinamide-GDP ribazoletransferase (231 aa).

6 consecutive transmembrane segments (helical) span residues 24-44 (LWAF…ILYL), 46-66 (LPLS…LLHL), 96-116 (IAGL…LQLL), 159-176 (LALG…VVLF), 181-198 (LAGI…RISL), and 209-229 (LGAT…LVWW).

It belongs to the CobS family. The cofactor is Mg(2+).

Its subcellular location is the cell membrane. The catalysed reaction is alpha-ribazole + adenosylcob(III)inamide-GDP = adenosylcob(III)alamin + GMP + H(+). It carries out the reaction alpha-ribazole 5'-phosphate + adenosylcob(III)inamide-GDP = adenosylcob(III)alamin 5'-phosphate + GMP + H(+). It functions in the pathway cofactor biosynthesis; adenosylcobalamin biosynthesis; adenosylcobalamin from cob(II)yrinate a,c-diamide: step 7/7. Functionally, joins adenosylcobinamide-GDP and alpha-ribazole to generate adenosylcobalamin (Ado-cobalamin). Also synthesizes adenosylcobalamin 5'-phosphate from adenosylcobinamide-GDP and alpha-ribazole 5'-phosphate. This Thermococcus kodakarensis (strain ATCC BAA-918 / JCM 12380 / KOD1) (Pyrococcus kodakaraensis (strain KOD1)) protein is Adenosylcobinamide-GDP ribazoletransferase.